We begin with the raw amino-acid sequence, 380 residues long: Actin-like protein (380 aa).

This sequence belongs to the actin family. ARP1 subfamily.

It localises to the cytoplasm. Its subcellular location is the cytoskeleton. Its function is as follows. Involved in nuclear migration. May function as a component of the dynactin complex which activates force generation by cytoplasmic dynein. The protein is Actin-like protein (ro-4) of Neurospora crassa (strain ATCC 24698 / 74-OR23-1A / CBS 708.71 / DSM 1257 / FGSC 987).